A 485-amino-acid polypeptide reads, in one-letter code: Probable glycine dehydrogenase (decarboxylating) subunit 2 (485 aa).

Lys-273 carries the N6-(pyridoxal phosphate)lysine modification.

It belongs to the GcvP family. C-terminal subunit subfamily. The glycine cleavage system is composed of four proteins: P, T, L and H. In this organism, the P 'protein' is a heterodimer of two subunits. Pyridoxal 5'-phosphate serves as cofactor.

The enzyme catalyses N(6)-[(R)-lipoyl]-L-lysyl-[glycine-cleavage complex H protein] + glycine + H(+) = N(6)-[(R)-S(8)-aminomethyldihydrolipoyl]-L-lysyl-[glycine-cleavage complex H protein] + CO2. In terms of biological role, the glycine cleavage system catalyzes the degradation of glycine. The P protein binds the alpha-amino group of glycine through its pyridoxal phosphate cofactor; CO(2) is released and the remaining methylamine moiety is then transferred to the lipoamide cofactor of the H protein. In Oceanobacillus iheyensis (strain DSM 14371 / CIP 107618 / JCM 11309 / KCTC 3954 / HTE831), this protein is Probable glycine dehydrogenase (decarboxylating) subunit 2.